A 331-amino-acid polypeptide reads, in one-letter code: Phosphoribosylformylglycinamidine cyclo-ligase (331 aa).

It belongs to the AIR synthase family.

The protein resides in the cytoplasm. The catalysed reaction is 2-formamido-N(1)-(5-O-phospho-beta-D-ribosyl)acetamidine + ATP = 5-amino-1-(5-phospho-beta-D-ribosyl)imidazole + ADP + phosphate + H(+). The protein operates within purine metabolism; IMP biosynthesis via de novo pathway; 5-amino-1-(5-phospho-D-ribosyl)imidazole from N(2)-formyl-N(1)-(5-phospho-D-ribosyl)glycinamide: step 2/2. The polypeptide is Phosphoribosylformylglycinamidine cyclo-ligase (Clostridium kluyveri (strain NBRC 12016)).